The following is a 192-amino-acid chain: Orotate phosphoribosyltransferase (192 aa).

5-phospho-alpha-D-ribose 1-diphosphate-binding positions include Arg-101, Lys-102, Lys-105, His-107, and 129–137 (EDVITTGGS). Positions 133 and 161 each coordinate orotate.

The protein belongs to the purine/pyrimidine phosphoribosyltransferase family. PyrE subfamily. Homodimer. Mg(2+) is required as a cofactor.

It carries out the reaction orotidine 5'-phosphate + diphosphate = orotate + 5-phospho-alpha-D-ribose 1-diphosphate. The protein operates within pyrimidine metabolism; UMP biosynthesis via de novo pathway; UMP from orotate: step 1/2. Its function is as follows. Catalyzes the transfer of a ribosyl phosphate group from 5-phosphoribose 1-diphosphate to orotate, leading to the formation of orotidine monophosphate (OMP). The protein is Orotate phosphoribosyltransferase of Sorangium cellulosum (strain So ce56) (Polyangium cellulosum (strain So ce56)).